A 440-amino-acid chain; its full sequence is Chromosomal replication initiator protein DnaA (440 aa).

Positions 1 to 75 (MNPNQILENL…QSGNKASVLI (75 aa)) are domain I, interacts with DnaA modulators. Residues 75–99 (IQAQSAKQSSKSTKIDIAHIKAQST) form a domain II region. Positions 100 to 316 (ILNPSFTFES…GIIISLNAYA (217 aa)) are domain III, AAA+ region. ATP is bound by residues Gly-146, Gly-148, Lys-149, and Thr-150. The segment at 317-440 (TILGQEITLE…KNKILVKSQS (124 aa)) is domain IV, binds dsDNA.

It belongs to the DnaA family. In terms of assembly, oligomerizes as a right-handed, spiral filament on DNA at oriC.

The protein resides in the cytoplasm. In terms of biological role, plays an essential role in the initiation and regulation of chromosomal replication. ATP-DnaA binds to the origin of replication (oriC) to initiate formation of the DNA replication initiation complex once per cell cycle. Binds the DnaA box (a 9 base pair repeat at the origin) and separates the double-stranded (ds)DNA. Forms a right-handed helical filament on oriC DNA; dsDNA binds to the exterior of the filament while single-stranded (ss)DNA is stabiized in the filament's interior. The ATP-DnaA-oriC complex binds and stabilizes one strand of the AT-rich DNA unwinding element (DUE), permitting loading of DNA polymerase. After initiation quickly degrades to an ADP-DnaA complex that is not apt for DNA replication. Binds acidic phospholipids. The polypeptide is Chromosomal replication initiator protein DnaA (Campylobacter jejuni subsp. jejuni serotype O:6 (strain 81116 / NCTC 11828)).